A 240-amino-acid chain; its full sequence is Probable transcriptional regulatory protein Nmul_A2722 (240 aa).

Belongs to the TACO1 family.

It is found in the cytoplasm. This chain is Probable transcriptional regulatory protein Nmul_A2722, found in Nitrosospira multiformis (strain ATCC 25196 / NCIMB 11849 / C 71).